Here is a 137-residue protein sequence, read N- to C-terminus: Putative pre-16S rRNA nuclease (137 aa).

The protein belongs to the YqgF nuclease family.

It is found in the cytoplasm. Functionally, could be a nuclease involved in processing of the 5'-end of pre-16S rRNA. This is Putative pre-16S rRNA nuclease from Actinobacillus pleuropneumoniae serotype 5b (strain L20).